The chain runs to 209 residues: Imidazole glycerol phosphate synthase subunit HisH (209 aa).

One can recognise a Glutamine amidotransferase type-1 domain in the interval 5–209; sequence AIAIIDYDMG…LRNFVALVKD (205 aa). Residue Cys83 is the Nucleophile of the active site. Residues His188 and Glu190 contribute to the active site.

As to quaternary structure, heterodimer of HisH and HisF.

The protein resides in the cytoplasm. It catalyses the reaction 5-[(5-phospho-1-deoxy-D-ribulos-1-ylimino)methylamino]-1-(5-phospho-beta-D-ribosyl)imidazole-4-carboxamide + L-glutamine = D-erythro-1-(imidazol-4-yl)glycerol 3-phosphate + 5-amino-1-(5-phospho-beta-D-ribosyl)imidazole-4-carboxamide + L-glutamate + H(+). The enzyme catalyses L-glutamine + H2O = L-glutamate + NH4(+). It participates in amino-acid biosynthesis; L-histidine biosynthesis; L-histidine from 5-phospho-alpha-D-ribose 1-diphosphate: step 5/9. IGPS catalyzes the conversion of PRFAR and glutamine to IGP, AICAR and glutamate. The HisH subunit catalyzes the hydrolysis of glutamine to glutamate and ammonia as part of the synthesis of IGP and AICAR. The resulting ammonia molecule is channeled to the active site of HisF. The sequence is that of Imidazole glycerol phosphate synthase subunit HisH from Thermosynechococcus vestitus (strain NIES-2133 / IAM M-273 / BP-1).